A 160-amino-acid polypeptide reads, in one-letter code: D-aminoacyl-tRNA deacylase (160 aa).

Positions 137–138 (GP) match the Gly-cisPro motif, important for rejection of L-amino acids motif.

The protein belongs to the DTD family. Homodimer.

The protein localises to the cytoplasm. The catalysed reaction is glycyl-tRNA(Ala) + H2O = tRNA(Ala) + glycine + H(+). It catalyses the reaction a D-aminoacyl-tRNA + H2O = a tRNA + a D-alpha-amino acid + H(+). Functionally, an aminoacyl-tRNA editing enzyme that deacylates mischarged D-aminoacyl-tRNAs. Also deacylates mischarged glycyl-tRNA(Ala), protecting cells against glycine mischarging by AlaRS. Acts via tRNA-based rather than protein-based catalysis; rejects L-amino acids rather than detecting D-amino acids in the active site. By recycling D-aminoacyl-tRNA to D-amino acids and free tRNA molecules, this enzyme counteracts the toxicity associated with the formation of D-aminoacyl-tRNA entities in vivo and helps enforce protein L-homochirality. The sequence is that of D-aminoacyl-tRNA deacylase from Chloroflexus aurantiacus (strain ATCC 29364 / DSM 637 / Y-400-fl).